A 340-amino-acid polypeptide reads, in one-letter code: Ketol-acid reductoisomerase (NADP(+)) (340 aa).

Residues 1–182 form the KARI N-terminal Rossmann domain; the sequence is MRVYYDRDCD…GGGRSGIIET (182 aa). Residues 24 to 27, Arg-48, Ser-51, Ser-53, and 83 to 86 each bind NADP(+); these read YGSQ and DELQ. His-108 is an active-site residue. Residue Gly-134 participates in NADP(+) binding. The 147-residue stretch at 183–329 folds into the KARI C-terminal knotted domain; it reads NFRQECETDL…EKLRGMMPWI (147 aa). Mg(2+)-binding residues include Asp-191, Glu-195, Glu-227, and Glu-231. Ser-252 contacts substrate.

The protein belongs to the ketol-acid reductoisomerase family. Requires Mg(2+) as cofactor.

It carries out the reaction (2R)-2,3-dihydroxy-3-methylbutanoate + NADP(+) = (2S)-2-acetolactate + NADPH + H(+). It catalyses the reaction (2R,3R)-2,3-dihydroxy-3-methylpentanoate + NADP(+) = (S)-2-ethyl-2-hydroxy-3-oxobutanoate + NADPH + H(+). The protein operates within amino-acid biosynthesis; L-isoleucine biosynthesis; L-isoleucine from 2-oxobutanoate: step 2/4. Its pathway is amino-acid biosynthesis; L-valine biosynthesis; L-valine from pyruvate: step 2/4. Its function is as follows. Involved in the biosynthesis of branched-chain amino acids (BCAA). Catalyzes an alkyl-migration followed by a ketol-acid reduction of (S)-2-acetolactate (S2AL) to yield (R)-2,3-dihydroxy-isovalerate. In the isomerase reaction, S2AL is rearranged via a Mg-dependent methyl migration to produce 3-hydroxy-3-methyl-2-ketobutyrate (HMKB). In the reductase reaction, this 2-ketoacid undergoes a metal-dependent reduction by NADPH to yield (R)-2,3-dihydroxy-isovalerate. This is Ketol-acid reductoisomerase (NADP(+)) from Paracoccus denitrificans (strain Pd 1222).